Consider the following 348-residue polypeptide: Alanine racemase (348 aa).

Lys34 functions as the Proton acceptor; specific for D-alanine in the catalytic mechanism. Lys34 carries the N6-(pyridoxal phosphate)lysine modification. Arg127 serves as a coordination point for substrate. The active-site Proton acceptor; specific for L-alanine is Tyr243. Residue Met291 coordinates substrate.

This sequence belongs to the alanine racemase family. Pyridoxal 5'-phosphate serves as cofactor.

It catalyses the reaction L-alanine = D-alanine. Its pathway is amino-acid biosynthesis; D-alanine biosynthesis; D-alanine from L-alanine: step 1/1. Its function is as follows. Catalyzes the interconversion of L-alanine and D-alanine. May also act on other amino acids. This Coprothermobacter proteolyticus (strain ATCC 35245 / DSM 5265 / OCM 4 / BT) protein is Alanine racemase (alr).